The sequence spans 855 residues: Transcription factor gaf1 (855 aa).

Polar residues predominate over residues 72–112; sequence KNLTPNGDSNTLTPDTFSDPTAPSSAQSVPPTSSAETTADN. 6 disordered regions span residues 72-126, 149-184, 229-287, 412-483, 602-643, and 680-768; these read KNLT…PAYS, TSFD…ESQP, SHNL…GFPS, PNSN…DMFS, NKNA…TRTT, and KKRN…SQSM. A compositionally biased stretch (basic and acidic residues) spans 149-168; it reads TSFDESTAKSKKRSIADSHF. The residue at position 150 (S150) is a Phosphoserine. Composition is skewed to low complexity over residues 240 to 250 and 428 to 444; these read PANSNNSASPN and NSSK…DSNQ. Over residues 445 to 476 the composition is skewed to polar residues; the sequence is ENAESFNPSISSHNSAEWASGETTGHSSNSPL. The span at 614–623 shows a compositional bias: basic and acidic residues; that stretch reads AEDKKGDANT. Composition is skewed to low complexity over residues 625-643 and 707-717; these read RANA…TRTT and SKSSSAKSTAA. The GATA-type zinc-finger motif lies at 635–659; that stretch reads CTNCQTRTTPLWRRSPDGQPLCNAC. S727 and S729 each carry phosphoserine. Residues 755 to 767 are compositionally biased toward low complexity; sequence QQQSSENESKSQS.

The protein localises to the nucleus. In terms of biological role, transcriptional activator. This is Transcription factor gaf1 (gaf1) from Schizosaccharomyces pombe (strain 972 / ATCC 24843) (Fission yeast).